Reading from the N-terminus, the 448-residue chain is N-succinylarginine dihydrolase (448 aa).

Substrate is bound by residues G19 to S28, N110, and H137 to R138. E174 is a catalytic residue. R214 lines the substrate pocket. H250 is a catalytic residue. D252 and N365 together coordinate substrate. The Nucleophile role is filled by C371.

Belongs to the succinylarginine dihydrolase family. In terms of assembly, homodimer.

The enzyme catalyses N(2)-succinyl-L-arginine + 2 H2O + 2 H(+) = N(2)-succinyl-L-ornithine + 2 NH4(+) + CO2. It participates in amino-acid degradation; L-arginine degradation via AST pathway; L-glutamate and succinate from L-arginine: step 2/5. Functionally, catalyzes the hydrolysis of N(2)-succinylarginine into N(2)-succinylornithine, ammonia and CO(2). The protein is N-succinylarginine dihydrolase of Pseudomonas syringae pv. syringae (strain B728a).